The sequence spans 189 residues: GTP cyclohydrolase 1 (189 aa).

The Zn(2+) site is built by Cys-78, His-81, and Cys-150.

It belongs to the GTP cyclohydrolase I family. Homomer.

It catalyses the reaction GTP + H2O = 7,8-dihydroneopterin 3'-triphosphate + formate + H(+). Its pathway is cofactor biosynthesis; 7,8-dihydroneopterin triphosphate biosynthesis; 7,8-dihydroneopterin triphosphate from GTP: step 1/1. This chain is GTP cyclohydrolase 1, found in Bacillus cytotoxicus (strain DSM 22905 / CIP 110041 / 391-98 / NVH 391-98).